A 173-amino-acid chain; its full sequence is MSIILGIDPGSRITGYGVVQQKGSKCIYIASGCIRTKGDTLAPKLDMIFNGISEIIKQYQPTEFGIEQVFMAKNPDSALKLGQARGAAIVAATQADLYVCEYSARQIKQAVSGSGGATKEQVQQMVMQILNLSGRPQADAADGLAVAICHAHTAQTIVAMSGKVSKTVRGRFR.

Residues Asp8, Glu67, and Asp139 contribute to the active site. Residues Asp8, Glu67, and Asp139 each contribute to the Mg(2+) site.

This sequence belongs to the RuvC family. As to quaternary structure, homodimer which binds Holliday junction (HJ) DNA. The HJ becomes 2-fold symmetrical on binding to RuvC with unstacked arms; it has a different conformation from HJ DNA in complex with RuvA. In the full resolvosome a probable DNA-RuvA(4)-RuvB(12)-RuvC(2) complex forms which resolves the HJ. Requires Mg(2+) as cofactor.

It is found in the cytoplasm. The enzyme catalyses Endonucleolytic cleavage at a junction such as a reciprocal single-stranded crossover between two homologous DNA duplexes (Holliday junction).. Its function is as follows. The RuvA-RuvB-RuvC complex processes Holliday junction (HJ) DNA during genetic recombination and DNA repair. Endonuclease that resolves HJ intermediates. Cleaves cruciform DNA by making single-stranded nicks across the HJ at symmetrical positions within the homologous arms, yielding a 5'-phosphate and a 3'-hydroxyl group; requires a central core of homology in the junction. The consensus cleavage sequence is 5'-(A/T)TT(C/G)-3'. Cleavage occurs on the 3'-side of the TT dinucleotide at the point of strand exchange. HJ branch migration catalyzed by RuvA-RuvB allows RuvC to scan DNA until it finds its consensus sequence, where it cleaves and resolves the cruciform DNA. In Psychromonas ingrahamii (strain DSM 17664 / CCUG 51855 / 37), this protein is Crossover junction endodeoxyribonuclease RuvC.